A 631-amino-acid chain; its full sequence is MLLSELSHPNQLHGLTVSQLEEIACQIRERHLQVVSTSGGHLGPGLGVVELTLALYQTLDLDFDKVVWDVGHQAYPHKLVTGRFNEFDSLRQQKGIAGYLKRSESIFDHFGAGHASTSISAALGMAIARDAKGENHKCVAVIGDGALTGGMALEAINHAGTLPETPFLVILNDNDMSISPPVGALSTYLNKVRLSPPLQFLSNSVQESVKNIPLIGKDLPEELKTIKGSVRRLAVPKVGAVFEELGFTYMGPIQGHDISNLINTFNAAHRLKKPVLVHVVTTKGKGYPYAEADQVGYHAQSSFNLTTGKSIPSSKPKPVSYSKIFGQTLLKICEQDSKVIGITAAMATGTGLDLLQKNIPEQYIDVGIAEQHAVTLAAGMSCDGLKPVVAIYSTFLQRAFDQLIHDVGIQNLPVSFVLDRAGIVGADGPTHQGQYDISYMRSIPNFVLMAPKDEAELQRMLITSINHKGPTALRIPRGSGRGVAVMDEGWEPLNIGEGEILEDGEDILIVAYGSMVSSAIETSKLLKDKNISPCVINARFVRPLDKDLILPLANKIKKVVTMEEGTLIGGFGSAIVELLNDNDINIPVFRIGIPDVLVDHASPDQSKTQLGLMPNQMSENIINRFNLIKNF.

Residues H72 and 113–115 (GHA) contribute to the thiamine diphosphate site. D144 is a binding site for Mg(2+). Residues 145–146 (GA), N174, Y287, and E370 each bind thiamine diphosphate. N174 provides a ligand contact to Mg(2+).

This sequence belongs to the transketolase family. DXPS subfamily. Homodimer. The cofactor is Mg(2+). Thiamine diphosphate is required as a cofactor.

The enzyme catalyses D-glyceraldehyde 3-phosphate + pyruvate + H(+) = 1-deoxy-D-xylulose 5-phosphate + CO2. Its pathway is metabolic intermediate biosynthesis; 1-deoxy-D-xylulose 5-phosphate biosynthesis; 1-deoxy-D-xylulose 5-phosphate from D-glyceraldehyde 3-phosphate and pyruvate: step 1/1. Functionally, catalyzes the acyloin condensation reaction between C atoms 2 and 3 of pyruvate and glyceraldehyde 3-phosphate to yield 1-deoxy-D-xylulose-5-phosphate (DXP). This Prochlorococcus marinus (strain MIT 9515) protein is 1-deoxy-D-xylulose-5-phosphate synthase.